We begin with the raw amino-acid sequence, 409 residues long: 2,3-bisphosphoglycerate-independent phosphoglycerate mutase (409 aa).

Residues 160–179 form a disordered region; it reads ITDADPKHEGNKPKTVKPLD.

Belongs to the BPG-independent phosphoglycerate mutase family. A-PGAM subfamily.

The catalysed reaction is (2R)-2-phosphoglycerate = (2R)-3-phosphoglycerate. It participates in carbohydrate degradation; glycolysis; pyruvate from D-glyceraldehyde 3-phosphate: step 3/5. Functionally, catalyzes the interconversion of 2-phosphoglycerate and 3-phosphoglycerate. The sequence is that of 2,3-bisphosphoglycerate-independent phosphoglycerate mutase from Methanosphaera stadtmanae (strain ATCC 43021 / DSM 3091 / JCM 11832 / MCB-3).